The sequence spans 343 residues: Heme A synthase (343 aa).

8 helical membrane-spanning segments follow: residues 13–33 (VAIW…VGGA), 96–116 (HRLL…VFLI), 130–150 (AMLG…SSGL), 161–181 (LMTH…TALD), 197–217 (GWAL…ALVA), 258–278 (FNHR…VVLA), 294–314 (AVAA…MAAV), and 318–338 (LGVL…AFAW). Histidine 260 contributes to the heme binding site. Histidine 322 provides a ligand contact to heme.

This sequence belongs to the COX15/CtaA family. Type 2 subfamily. Interacts with CtaB. Heme b is required as a cofactor.

The protein localises to the cell membrane. The enzyme catalyses Fe(II)-heme o + 2 A + H2O = Fe(II)-heme a + 2 AH2. Its pathway is porphyrin-containing compound metabolism; heme A biosynthesis; heme A from heme O: step 1/1. Catalyzes the conversion of heme O to heme A by two successive hydroxylations of the methyl group at C8. The first hydroxylation forms heme I, the second hydroxylation results in an unstable dihydroxymethyl group, which spontaneously dehydrates, resulting in the formyl group of heme A. The polypeptide is Heme A synthase (Caulobacter vibrioides (strain ATCC 19089 / CIP 103742 / CB 15) (Caulobacter crescentus)).